The chain runs to 23 residues: Ascaphin-1 (23 aa).

N23 is modified (asparagine amide).

In terms of tissue distribution, expressed by the skin glands.

Its subcellular location is the secreted. In terms of biological role, antimicrobial peptide that shows higher potency against Gram-negative bacteria than against Gram-positive bacteria. Has a very week hemolytic activity. This Ascaphus truei (Coastal tailed frog) protein is Ascaphin-1.